The chain runs to 144 residues: Large ribosomal subunit protein uL15 (144 aa).

Positions 1–48 are disordered; that stretch reads MIKLESLQDPSPRKRRTKLLGRGPSSGHGKTSCRGHKGDGSRSGYKRR.

It belongs to the universal ribosomal protein uL15 family. As to quaternary structure, part of the 50S ribosomal subunit.

Its function is as follows. Binds to the 23S rRNA. The polypeptide is Large ribosomal subunit protein uL15 (Chlamydia caviae (strain ATCC VR-813 / DSM 19441 / 03DC25 / GPIC) (Chlamydophila caviae)).